Consider the following 194-residue polypeptide: Histone H1.0 (194 aa).

The residue at position 1 (methionine 1) is an N-acetylmethionine. The span at 1–11 (MTENSTSAPAA) shows a compositional bias: low complexity. The segment at 1–28 (MTENSTSAPAAKPKRAKASKKSTDHPKY) is disordered. Position 2 is an N-acetylthreonine; in Histone H1.0, N-terminally processed (threonine 2). The 74-residue stretch at 24–97 (DHPKYSDMIV…GASGSFRLAK (74 aa)) folds into the H15 domain. Arginine 42 is subject to Citrulline. The tract at residues 86–194 (GVGASGSFRL…SSAKRASKKK (109 aa)) is disordered. An ADP-ribosylserine modification is found at serine 104. A compositionally biased stretch (basic residues) spans 105-194 (VAFKKTKKEV…SSAKRASKKK (90 aa)).

It belongs to the histone H1/H5 family. Post-translationally, ADP-ribosylated on Ser-104 in response to DNA damage.

It is found in the nucleus. The protein resides in the chromosome. Functionally, histones H1 are necessary for the condensation of nucleosome chains into higher-order structures. The histones H1.0 are found in cells that are in terminal stages of differentiation or that have low rates of cell division. The polypeptide is Histone H1.0 (H1-0) (Mus musculus (Mouse)).